We begin with the raw amino-acid sequence, 503 residues long: Cytochrome P450 3A25 (503 aa).

Cys-442 is a binding site for heme.

The protein belongs to the cytochrome P450 family. Heme serves as cofactor.

The protein resides in the endoplasmic reticulum membrane. The protein localises to the microsome membrane. The catalysed reaction is an organic molecule + reduced [NADPH--hemoprotein reductase] + O2 = an alcohol + oxidized [NADPH--hemoprotein reductase] + H2O + H(+). Cytochromes P450 are a group of heme-thiolate monooxygenases. In liver microsomes, this enzyme is involved in an NADPH-dependent electron transport pathway. It oxidizes a variety of structurally unrelated compounds, including steroids, fatty acids, and xenobiotics. The protein is Cytochrome P450 3A25 (Cyp3a25) of Mus musculus (Mouse).